The sequence spans 329 residues: Tryptophan--tRNA ligase (329 aa).

ATP-binding positions include 9–11 (QPS) and 17–18 (GN). The 'HIGH' region signature appears at 10–18 (PSGIPTIGN). Asp-133 is an L-tryptophan binding site. ATP contacts are provided by residues 145-147 (GDD), Val-184, and 193-197 (KMSKS). A 'KMSKS' region motif is present at residues 193–197 (KMSKS).

The protein belongs to the class-I aminoacyl-tRNA synthetase family. In terms of assembly, homodimer.

It localises to the cytoplasm. It catalyses the reaction tRNA(Trp) + L-tryptophan + ATP = L-tryptophyl-tRNA(Trp) + AMP + diphosphate + H(+). Functionally, catalyzes the attachment of tryptophan to tRNA(Trp). The chain is Tryptophan--tRNA ligase from Staphylococcus aureus (strain MSSA476).